Here is a 237-residue protein sequence, read N- to C-terminus: Eukaryotic translation initiation factor 3 subunit K (237 aa).

A PCI domain is found at 44–219; that stretch reads CDCNANRALL…EARKAEIRED (176 aa).

The protein belongs to the eIF-3 subunit K family. Component of the eukaryotic translation initiation factor 3 (eIF-3) complex.

The protein resides in the cytoplasm. In terms of biological role, component of the eukaryotic translation initiation factor 3 (eIF-3) complex, which is involved in protein synthesis of a specialized repertoire of mRNAs and, together with other initiation factors, stimulates binding of mRNA and methionyl-tRNAi to the 40S ribosome. The eIF-3 complex specifically targets and initiates translation of a subset of mRNAs involved in cell proliferation. This is Eukaryotic translation initiation factor 3 subunit K from Neurospora crassa (strain ATCC 24698 / 74-OR23-1A / CBS 708.71 / DSM 1257 / FGSC 987).